The chain runs to 349 residues: Ion-translocating oxidoreductase complex subunit D (349 aa).

Helical transmembrane passes span 36 to 56 (CAFFGWGTLIQVLLAIIVALS), 77 to 99 (SAMLTAILIGVAIPPLAPWWMIV), and 124 to 144 (AMAAYVLLLVSFPVQMTSWIA). At Thr185 the chain carries FMN phosphoryl threonine. Helical transmembrane passes span 212-232 (GTGVGWFWVNLAYLAGGLVLL), 239-259 (WHISTGVLAGLFVASSIGFLL), 265-285 (ASPLFHLFSGATMLAAFFIAT), 291-311 (ATSPRGRLIFGALIGVLVYII), and 315-335 (GGYPDAFAFAVLLANLCAPFI).

Belongs to the NqrB/RnfD family. In terms of assembly, the complex is composed of six subunits: RnfA, RnfB, RnfC, RnfD, RnfE and RnfG. The cofactor is FMN.

It localises to the cell inner membrane. In terms of biological role, part of a membrane-bound complex that couples electron transfer with translocation of ions across the membrane. In Shewanella sp. (strain ANA-3), this protein is Ion-translocating oxidoreductase complex subunit D.